The sequence spans 99 residues: DNA-binding protein Fis (99 aa).

A DNA-binding region (H-T-H motif) is located at residues 75–94 (QTRAATMLGINRGTLRKKLK).

It belongs to the transcriptional regulatory Fis family. Homodimer.

In terms of biological role, activates ribosomal RNA transcription. Plays a direct role in upstream activation of rRNA promoters. The polypeptide is DNA-binding protein Fis (Pasteurella multocida (strain Pm70)).